The sequence spans 251 residues: MSDALPMSPAEFEQALRAKGAYYHIHHPYHVAMYQGRATREQIQGWVANRFYYQVNIPMKDAAILANCPDREVRREWIQRLLDHDGAPGEDGGIEAWLRLGQAVGLDPDQLRSQELVLPGVRFAVDAYVNFARRASWQEAASSSLTELFAPQIHQSRLDSWPQHYPWIDPAGYEYFRTRLGQARRDVEHGLAITLQHYTTRAGQERMLEILQFKLDILWSMLDAMSMAYELNRPPYHSVTQERVWHKGITL.

This sequence belongs to the PqqC family.

The catalysed reaction is 6-(2-amino-2-carboxyethyl)-7,8-dioxo-1,2,3,4,7,8-hexahydroquinoline-2,4-dicarboxylate + 3 O2 = pyrroloquinoline quinone + 2 H2O2 + 2 H2O + H(+). It participates in cofactor biosynthesis; pyrroloquinoline quinone biosynthesis. Functionally, ring cyclization and eight-electron oxidation of 3a-(2-amino-2-carboxyethyl)-4,5-dioxo-4,5,6,7,8,9-hexahydroquinoline-7,9-dicarboxylic-acid to PQQ. In Pseudomonas putida (strain ATCC 47054 / DSM 6125 / CFBP 8728 / NCIMB 11950 / KT2440), this protein is Pyrroloquinoline-quinone synthase.